A 472-amino-acid chain; its full sequence is Eukaryotic translation initiation factor 2 subunit 3 (472 aa).

N-acetylalanine is present on A2. S16 carries the post-translational modification Phosphoserine. Residues 39-248 (QATINIGTIG…IVKKIPVPPR (210 aa)) enclose the tr-type G domain. The interval 48-55 (GHVAHGKS) is G1. 51-56 (AHGKST) is a binding site for GTP. The G2 stretch occupies residues 76-80 (NITIK). The G3 stretch occupies residues 134–137 (DCPG). GTP-binding positions include 190–193 (NKID) and 225–227 (SAQ). The interval 190–193 (NKID) is G4. The interval 225–227 (SAQ) is G5. The interval 457–469 (GQIRRGVTIKPTV) is interacts with CDC123.

It belongs to the TRAFAC class translation factor GTPase superfamily. Classic translation factor GTPase family. EIF2G subfamily. As to quaternary structure, eukaryotic translation initiation factor 2 eIF2 is a heterotrimeric complex composed of an alpha (EIF2S1), a beta (EIF2S2) and a gamma (EIF2S3) chain. eIF2 is member of the 43S pre-initiation complex (43S PIC). Interacts (via C-terminus) with CDC123; the interaction is direct.

The protein localises to the cytoplasm. It localises to the cytosol. The enzyme catalyses GTP + H2O = GDP + phosphate + H(+). Functionally, member of the eIF2 complex that functions in the early steps of protein synthesis by forming a ternary complex with GTP and initiator tRNA. This complex binds to a 40S ribosomal subunit, followed by mRNA binding to form the 43S pre-initiation complex (43S PIC). Junction of the 60S ribosomal subunit to form the 80S initiation complex is preceded by hydrolysis of the GTP bound to eIF2 and release of an eIF2-GDP binary complex. In order for eIF2 to recycle and catalyze another round of initiation, the GDP bound to eIF2 must exchange with GTP by way of a reaction catalyzed by eIF-2B. The polypeptide is Eukaryotic translation initiation factor 2 subunit 3 (EIF2S3) (Bos taurus (Bovine)).